Consider the following 319-residue polypeptide: Cobalamin biosynthesis protein CbiB (319 aa).

4 consecutive transmembrane segments (helical) span residues 56-76, 82-102, 153-173, and 296-316; these read VMWV…LALA, WFGW…RSLA, VDGI…LAMA, and LMWV…CGLS.

This sequence belongs to the CobD/CbiB family.

It localises to the cell membrane. The protein operates within cofactor biosynthesis; adenosylcobalamin biosynthesis. Functionally, converts cobyric acid to cobinamide by the addition of aminopropanol on the F carboxylic group. However, the true cosubstrate could be (R)-1-amino-2-propanol O-2-phosphate, leading to cobinamide phosphate. The chain is Cobalamin biosynthesis protein CbiB from Salmonella paratyphi A (strain ATCC 9150 / SARB42).